The following is a 222-amino-acid chain: MLKKTIAIIILIIGLLLIFSPFIKNGIVKYMSGHETIEQYKASDIKKNNEKDATFDFESVQLPSMTSVIKGAANYDKDAVVGSIAVPSVDVNLLVFKGTNTANLLAGATTMRSDQVMGKGNYPLAGHHMRDESMLFGPIMKVKKGDKIYLTDLENLYEYTVTETKTIDETEVSVIDNTKDARITLITCDKPTETTKRFVAVGELEKTEKLTKELENKYFPSK.

Residues 1 to 7 (MLKKTIA) lie on the Cytoplasmic side of the membrane. The helical transmembrane segment at 8–28 (IIILIIGLLLIFSPFIKNGIV) threads the bilayer. The Extracellular portion of the chain corresponds to 29–222 (KYMSGHETIE…ELENKYFPSK (194 aa)). H127 (proton donor/acceptor) is an active-site residue. C188 functions as the Acyl-thioester intermediate in the catalytic mechanism.

This sequence belongs to the bacterial sortase family. Class A subfamily.

It localises to the cell membrane. Its activity is regulated as follows. Activity is enhanced by Zn(2+) and strongly enhanced by Ca(2+). Inhibited by chalcone, a precursor of several flavonoids, which blocks the SrtA active site. Its function is as follows. Transpeptidase that anchors surface proteins to the cell wall. Recognizes and modifies its substrate by proteolytic cleavage of a C-terminal sorting signal. Following cleavage, a covalent intermediate is formed via a thioester bond between the sortase and its substrate, which is then transferred and covalently attached to the cell wall. This sortase recognizes a Leu-Pro-x-Thr-Gly (LPXTG) motif, which is cleaved by the sortase between the threonine and glycine residues. Involved in pathogenesis. May regulate the rate of synthesis and/or the stability of a subset of LPXTG proteins. Not involved in cell wall-anchoring of Hbp2 (SvpA) or Hbp1. The chain is Sortase A from Listeria monocytogenes serovar 1/2a (strain ATCC BAA-679 / EGD-e).